The sequence spans 169 residues: Putative phosphoesterase SE_0715 (169 aa).

Histidine 34 acts as the Proton donor in catalysis. Short sequence motifs (HXTX) lie at residues 34–37 (HITI) and 115–118 (HFTI). The active-site Proton acceptor is histidine 115.

The protein belongs to the 2H phosphoesterase superfamily. YjcG family.

This is Putative phosphoesterase SE_0715 from Staphylococcus epidermidis (strain ATCC 12228 / FDA PCI 1200).